Consider the following 709-residue polypeptide: ATP-dependent zinc metalloprotease YME1 homolog (709 aa).

The disordered stretch occupies residues 152-182; the sequence is FTSDTSSTVSSTPSLNHSLQNSMPPSTPTPP. Residues 153 to 165 show a composition bias toward low complexity; the sequence is TSDTSSTVSSTPS. Residues 217–239 form a helical membrane-spanning segment; the sequence is IFKFIAGLSVASYFVLLGMSIFA. 307–314 contributes to the ATP binding site; sequence GPPGTGKT. H530 lines the Zn(2+) pocket. E531 is a catalytic residue. Zn(2+) contacts are provided by H534 and D608.

This sequence in the N-terminal section; belongs to the AAA ATPase family. The protein in the C-terminal section; belongs to the peptidase M41 family. It depends on Zn(2+) as a cofactor.

Its subcellular location is the mitochondrion membrane. In terms of biological role, putative ATP-dependent protease. The protein is ATP-dependent zinc metalloprotease YME1 homolog of Schizosaccharomyces pombe (strain 972 / ATCC 24843) (Fission yeast).